A 143-amino-acid polypeptide reads, in one-letter code: ATP synthase subunit b' (143 aa).

A helical transmembrane segment spans residues 6–26 (ATLPFMALQFLLLAAVLNAIF).

This sequence belongs to the ATPase B chain family. F-type ATPases have 2 components, F(1) - the catalytic core - and F(0) - the membrane proton channel. F(1) has five subunits: alpha(3), beta(3), gamma(1), delta(1), epsilon(1). F(0) has four main subunits: a(1), b(1), b'(1) and c(10-14). The alpha and beta chains form an alternating ring which encloses part of the gamma chain. F(1) is attached to F(0) by a central stalk formed by the gamma and epsilon chains, while a peripheral stalk is formed by the delta, b and b' chains.

Its subcellular location is the cellular thylakoid membrane. F(1)F(0) ATP synthase produces ATP from ADP in the presence of a proton or sodium gradient. F-type ATPases consist of two structural domains, F(1) containing the extramembraneous catalytic core and F(0) containing the membrane proton channel, linked together by a central stalk and a peripheral stalk. During catalysis, ATP synthesis in the catalytic domain of F(1) is coupled via a rotary mechanism of the central stalk subunits to proton translocation. Its function is as follows. Component of the F(0) channel, it forms part of the peripheral stalk, linking F(1) to F(0). The b'-subunit is a diverged and duplicated form of b found in plants and photosynthetic bacteria. This Nostoc punctiforme (strain ATCC 29133 / PCC 73102) protein is ATP synthase subunit b'.